We begin with the raw amino-acid sequence, 320 residues long: Dermonecrotic toxin LarSicTox-alphaIB2a (320 aa).

A signal peptide spans 1–15; sequence MSHSSTALLHPYVAA. A propeptide spanning residues 16-41 is cleaved from the precursor; the sequence is RATEKFAPIYFFCHPLQSAETDVAER. The active site involves His-52. The Mg(2+) site is built by Glu-72 and Asp-74. The Nucleophile role is filled by His-88. 2 disulfide bridges follow: Cys-92-Cys-98 and Cys-94-Cys-237. Asp-132 provides a ligand contact to Mg(2+). Asn-297 carries an N-linked (GlcNAc...) asparagine glycan.

This sequence belongs to the arthropod phospholipase D family. Class II subfamily. It depends on Mg(2+) as a cofactor. Expressed by the venom gland.

The protein resides in the secreted. The enzyme catalyses an N-(acyl)-sphingosylphosphocholine = an N-(acyl)-sphingosyl-1,3-cyclic phosphate + choline. The catalysed reaction is an N-(acyl)-sphingosylphosphoethanolamine = an N-(acyl)-sphingosyl-1,3-cyclic phosphate + ethanolamine. It carries out the reaction a 1-acyl-sn-glycero-3-phosphocholine = a 1-acyl-sn-glycero-2,3-cyclic phosphate + choline. It catalyses the reaction a 1-acyl-sn-glycero-3-phosphoethanolamine = a 1-acyl-sn-glycero-2,3-cyclic phosphate + ethanolamine. In terms of biological role, dermonecrotic toxins cleave the phosphodiester linkage between the phosphate and headgroup of certain phospholipids (sphingolipid and lysolipid substrates), forming an alcohol (often choline) and a cyclic phosphate. This toxin acts on sphingomyelin (SM). It may also act on ceramide phosphoethanolamine (CPE), lysophosphatidylcholine (LPC) and lysophosphatidylethanolamine (LPE), but not on lysophosphatidylserine (LPS), and lysophosphatidylglycerol (LPG). It acts by transphosphatidylation, releasing exclusively cyclic phosphate products as second products. Induces dermonecrosis, hemolysis, increased vascular permeability, edema, inflammatory response, and platelet aggregation. In Loxosceles arizonica (Arizona brown spider), this protein is Dermonecrotic toxin LarSicTox-alphaIB2a.